A 507-amino-acid chain; its full sequence is Subtilisin-like protease 1 (507 aa).

The first 19 residues, Met-1–Ala-19, serve as a signal peptide directing secretion. A propeptide spanning residues Ala-20–Asn-116 is cleaved from the precursor. Residues Ser-34–Ile-113 form the Inhibitor I9 domain. The 275-residue stretch at Ser-126–Lys-400 folds into the Peptidase S8 domain. Active-site charge relay system residues include Asp-158 and His-190. Residues Gly-175–Met-198 form a disordered region. Residue Asn-251 is glycosylated (N-linked (GlcNAc...) asparagine). Polar residues predominate over residues Asn-282 to Ser-294. Residues Asn-282 to Ser-312 form a disordered region. Ser-345 functions as the Charge relay system in the catalytic mechanism. Polar residues predominate over residues Ser-378–Ile-394. Residues Ser-378–Asp-486 are disordered. 2 stretches are compositionally biased toward pro residues: residues Lys-405 to Pro-428 and Glu-438 to Pro-449. Residues Phe-450–Pro-461 show a composition bias toward low complexity. The span at Ala-462 to Pro-476 shows a compositional bias: pro residues.

Belongs to the peptidase S8 family.

The protein resides in the secreted. In terms of biological role, secreted subtilisin-like serine protease with keratinolytic activity that contributes to pathogenicity. The chain is Subtilisin-like protease 1 (SUB1) from Trichophyton equinum (Horse ringworm fungus).